The sequence spans 156 residues: uncharacterized protein (156 aa).

This is an uncharacterized protein from Saccharolobus islandicus (Sulfolobus islandicus).